The following is a 396-amino-acid chain: Cytochrome c biogenesis protein Ccs1 (396 aa).

3 helical membrane-spanning segments follow: residues 22–42 (LKFSITLFIIICIVSAIGTII), 79–99 (SNFYLILLLCLSFSLFFCSLK), and 162–182 (AGPLLIHLSLILILLGSAIHA).

This sequence belongs to the Ccs1/CcsB family. May interact with CcsA.

The protein resides in the plastid. The protein localises to the chloroplast thylakoid membrane. Required during biogenesis of c-type cytochromes (cytochrome c6 and cytochrome f) at the step of heme attachment. In Cyanidium caldarium (Red alga), this protein is Cytochrome c biogenesis protein Ccs1.